Reading from the N-terminus, the 943-residue chain is Receptor-like kinase TMK3 (943 aa).

Residues 1–24 (MSNSHLGTLCFIISLLGLANFSLS) form the signal peptide. At 25 to 482 (QTGLDDSTMQ…ETSKKSSNVK (458 aa)) the chain is on the extracellular side. An N-linked (GlcNAc...) asparagine glycan is attached at Asn-41. Cys-54 and Cys-61 form a disulfide bridge. 10 LRR repeats span residues 64 to 88 (SNRV…LQSL), 89 to 111 (SELV…LSGL), 112 to 134 (SRLQ…LFSG), 136 to 160 (SSLQ…VKEA), 162 to 183 (SLQN…FFGS), 186 to 210 (LPSL…FAGT), 212 to 232 (IQSL…LGNM), 233 to 254 (TSLV…DLSG), 255 to 279 (LVSL…LVSL), and 281 to 301 (SLTT…LFGK). N-linked (GlcNAc...) asparagine glycosylation is found at Asn-165 and Asn-170. Asn-223 and Asn-231 each carry an N-linked (GlcNAc...) asparagine glycan. The N-linked (GlcNAc...) asparagine glycan is linked to Asn-286. Intrachain disulfides connect Cys-315–Cys-323 and Cys-353–Cys-361. 3 LRR repeats span residues 363–386 (GGNI…SLAK), 387–410 (LTSL…ELTT), and 411–438 (LSKL…VTLV). Asn-365 carries an N-linked (GlcNAc...) asparagine glycan. Positions 441-476 (GNANMGKNGPNKTSDAPGASPGSKPSGGSDGSETSK) are disordered. The N-linked (GlcNAc...) asparagine glycan is linked to Asn-451. Over residues 454–467 (SDAPGASPGSKPSG) the composition is skewed to low complexity. Residues 483-503 (IIVPVVGGVVGALCLVGLGVC) traverse the membrane as a helical segment. At 504-943 (LYAKKRKRPA…ADSFTSVDGR (440 aa)) the chain is on the cytoplasmic side. Positions 514–534 (RVQSPSSNMVIHPHHSGDNDD) are disordered. The region spanning 585-866 (FSEENILGRG…AHIVNVLSSL (282 aa)) is the Protein kinase domain. ATP is bound by residues 591–599 (LGRGGFGTV) and Lys-613. Asp-714 functions as the Proton acceptor in the catalytic mechanism. The tract at residues 904–943 (QTADDSGSSSSAYGSKDNTQTSIPTRPSGFADSFTSVDGR) is disordered. Residues 906 to 918 (ADDSGSSSSAYGS) are compositionally biased toward low complexity. Over residues 919–928 (KDNTQTSIPT) the composition is skewed to polar residues.

The protein belongs to the protein kinase superfamily. Ser/Thr protein kinase family. In terms of tissue distribution, expressed in roots, leaves, stems, siliques and flowers.

It is found in the membrane. It carries out the reaction L-seryl-[protein] + ATP = O-phospho-L-seryl-[protein] + ADP + H(+). The enzyme catalyses L-threonyl-[protein] + ATP = O-phospho-L-threonyl-[protein] + ADP + H(+). Its function is as follows. Involved in auxin signal transduction and cell expansion and proliferation regulation. This Arabidopsis thaliana (Mouse-ear cress) protein is Receptor-like kinase TMK3.